The chain runs to 399 residues: MNIRPEIKTAFIVIILGIAIWILLTFPFRYGLDIRGGIRVTLQCQKTEGVEITDDAVRRTIEVIRNRIDQLGVTEPSIYKEGSDKIVVELPGIKDPERALEIIGQTALLEFKDETGKTILTGSALKNAKVEFDQVGQPMVRVEMNPEGAKIFADFTSKNVGKQVFIVLDGKVISNPVIKEPITEGTGVITGRFTIDEAQKLAILLRAGALPVPVKVIENRTIDPTLGKDTMESAYRAGVIGAILVVLFMILVFRFLGLVADIALLIYVVLDLAALKLLNATLTLPGVAGIILSIGMAVDANCLIFARMKEEYAQRKTPMASLDAGFRNALRAIIDSNVTTILAALILFYFGTGPIRGFAVTLSLGVALSMFTQITITRTLLENLLSLPVFKKATKLLGL.

Transmembrane regions (helical) follow at residues 7-27 (IKTA…LTFP), 239-259 (VIGA…LGLV), 262-282 (IALL…NATL), 286-306 (GVAG…LIFA), 329-351 (ALRA…FYFG), and 357-381 (GFAV…RTLL).

Belongs to the SecD/SecF family. SecD subfamily. Forms a complex with SecF. Part of the essential Sec protein translocation apparatus which comprises SecA, SecYEG and auxiliary proteins SecDF. Other proteins may also be involved.

The protein resides in the cell inner membrane. Part of the Sec protein translocase complex. Interacts with the SecYEG preprotein conducting channel. SecDF uses the proton motive force (PMF) to complete protein translocation after the ATP-dependent function of SecA. This Dictyoglomus turgidum (strain DSM 6724 / Z-1310) protein is Protein translocase subunit SecD.